The following is a 357-amino-acid chain: MRPARAFIDLQALRHNYQLARESSGGKALAVVKADAYGHGAVRVAQALEAQADGFAVACIEEALELRAAGIRAPVLLLEGFFEADELALIVEHDLWTVVHATWQLEAIEQARLGKPITVWLKLDTGMHRVGLHPHEYQAGYQRLLATGKVARIVLMSHFSRADELNSGCSDEQLAVFETFRKGLAAETSLKNSPAVLGWPQIPSDWSRPGIMLYGATPFDQVHPLADRLQPVMTLESKIISVRELPVGEPVGYGATFVCDRPLRIGVVAMGYADGYPRHAPTGTPVQIDGQPSRLLGRVSMDMLCVDLTEVPQAGLGSRVELWGKQVLASEVAQRAETIPYEIFCNLRRVPRIYSED.

Catalysis depends on Lys33, which acts as the Proton acceptor; specific for D-alanine. N6-(pyridoxal phosphate)lysine is present on Lys33. Arg129 lines the substrate pocket. The active-site Proton acceptor; specific for L-alanine is Tyr253. Met301 contributes to the substrate binding site.

This sequence belongs to the alanine racemase family. Pyridoxal 5'-phosphate serves as cofactor.

The enzyme catalyses L-alanine = D-alanine. It functions in the pathway amino-acid biosynthesis; D-alanine biosynthesis; D-alanine from L-alanine: step 1/1. Catalyzes the interconversion of L-alanine and D-alanine. May also act on other amino acids. This is Alanine racemase (alr) from Pseudomonas syringae pv. syringae (strain B728a).